The sequence spans 371 residues: S-adenosylmethionine:tRNA ribosyltransferase-isomerase (371 aa).

Belongs to the QueA family. Monomer.

The protein resides in the cytoplasm. It carries out the reaction 7-aminomethyl-7-carbaguanosine(34) in tRNA + S-adenosyl-L-methionine = epoxyqueuosine(34) in tRNA + adenine + L-methionine + 2 H(+). Its pathway is tRNA modification; tRNA-queuosine biosynthesis. In terms of biological role, transfers and isomerizes the ribose moiety from AdoMet to the 7-aminomethyl group of 7-deazaguanine (preQ1-tRNA) to give epoxyqueuosine (oQ-tRNA). This Rickettsia akari (strain Hartford) protein is S-adenosylmethionine:tRNA ribosyltransferase-isomerase.